The primary structure comprises 509 residues: Lysine--tRNA ligase (509 aa).

2 residues coordinate Mg(2+): glutamate 418 and glutamate 425.

Belongs to the class-II aminoacyl-tRNA synthetase family. As to quaternary structure, homodimer. Mg(2+) serves as cofactor.

The protein localises to the cytoplasm. The enzyme catalyses tRNA(Lys) + L-lysine + ATP = L-lysyl-tRNA(Lys) + AMP + diphosphate. This chain is Lysine--tRNA ligase, found in Acinetobacter baumannii (strain AB307-0294).